The following is a 392-amino-acid chain: Lipid-A-disaccharide synthase (392 aa).

This sequence belongs to the LpxB family.

The catalysed reaction is a lipid X + a UDP-2-N,3-O-bis[(3R)-3-hydroxyacyl]-alpha-D-glucosamine = a lipid A disaccharide + UDP + H(+). The protein operates within bacterial outer membrane biogenesis; LPS lipid A biosynthesis. Condensation of UDP-2,3-diacylglucosamine and 2,3-diacylglucosamine-1-phosphate to form lipid A disaccharide, a precursor of lipid A, a phosphorylated glycolipid that anchors the lipopolysaccharide to the outer membrane of the cell. The sequence is that of Lipid-A-disaccharide synthase from Syntrophotalea carbinolica (strain DSM 2380 / NBRC 103641 / GraBd1) (Pelobacter carbinolicus).